A 960-amino-acid polypeptide reads, in one-letter code: Vacuolar membrane protease (960 aa).

Residues 1–57 (MADNNSSSGSLVIDEQDYDVHEAGQQGQQGQQKHQQRQQERPSLITRVFRSVFGYRK) lie on the Cytoplasmic side of the membrane. The segment at 22 to 41 (EAGQQGQQGQQKHQQRQQER) is disordered. Over residues 24–33 (GQQGQQGQQK) the composition is skewed to low complexity. The chain crosses the membrane as a helical span at residues 58 to 78 (TSLSLFVVATIALCVSLSYID). The Vacuolar portion of the chain corresponds to 79 to 401 (NSVDFISFPT…FTISTSQLFK (323 aa)). Asn-148 is a glycosylation site (N-linked (GlcNAc...) asparagine). Zn(2+)-binding residues include His-189 and Asp-201. Residue Glu-235 is the Proton acceptor of the active site. Residues Glu-236, Glu-261, and His-333 each contribute to the Zn(2+) site. Residues 402–422 (INVALLTVFPILNGLLLLYTI) form a helical membrane-spanning segment. The Cytoplasmic portion of the chain corresponds to 423–432 (RSRKWQVSFS). A helical transmembrane segment spans residues 433-453 (SAISIPVALLVTMFIVVYLVV). The Vacuolar portion of the chain corresponds to 454-476 (ESYKSFNQYLPSSRPLLLVATIT). The helical transmembrane segment at 477 to 497 (SILLLVFSIILVAFSFFSIIA) threads the bilayer. Residues 498–502 (EENLR) lie on the Cytoplasmic side of the membrane. Residues 503 to 523 (LLAIVELSFAYWVGLAFTTHG) form a helical membrane-spanning segment. Residues 524 to 535 (LSGAESARHSGE) are Vacuolar-facing. A helical transmembrane segment spans residues 536–556 (FAVSILFTLEAVASFLGLIGW). Residues 557–635 (SLCRNRSHLQ…FGYDWSLQYL (79 aa)) lie on the Cytoplasmic side of the membrane. Positions 587–605 (NDHDHEHRHGHEDNEHGEA) are enriched in basic and acidic residues. A disordered region spans residues 587–614 (NDHDHEHRHGHEDNEHGEAHVQQQSQSR). A helical transmembrane segment spans residues 636–656 (ITVPLSIFIIYNSGWLVLEGV). Asn-657 carries N-linked (GlcNAc...) asparagine glycosylation. The Vacuolar portion of the chain corresponds to 657–668 (NKTLQESAKAET). The chain crosses the membrane as a helical span at residues 669-689 (FVYNLLWIVSVSLVLPLIPFA). The Cytoplasmic portion of the chain corresponds to 690–696 (GKLNRYM). A helical membrane pass occupies residues 697–717 (VFVLIAIGVLGTLLVHVVQPF). Topologically, residues 718–960 (NEANPLKLRF…LVAYTKQVHV (243 aa)) are vacuolar. Residues Asn-736, Asn-763, Asn-803, Asn-875, and Asn-921 are each glycosylated (N-linked (GlcNAc...) asparagine).

It belongs to the peptidase M28 family. The cofactor is Zn(2+).

The protein resides in the vacuole membrane. May be involved in vacuolar sorting and osmoregulation. This Lodderomyces elongisporus (strain ATCC 11503 / CBS 2605 / JCM 1781 / NBRC 1676 / NRRL YB-4239) (Yeast) protein is Vacuolar membrane protease.